Consider the following 365-residue polypeptide: tRNA(Met) cytidine acetate ligase (365 aa).

ATP contacts are provided by residues 7–20 (IAEF…HKYL), glycine 96, asparagine 152, and arginine 175.

It belongs to the TmcAL family.

It localises to the cytoplasm. The enzyme catalyses cytidine(34) in elongator tRNA(Met) + acetate + ATP = N(4)-acetylcytidine(34) in elongator tRNA(Met) + AMP + diphosphate. In terms of biological role, catalyzes the formation of N(4)-acetylcytidine (ac(4)C) at the wobble position of elongator tRNA(Met), using acetate and ATP as substrates. First activates an acetate ion to form acetyladenylate (Ac-AMP) and then transfers the acetyl group to tRNA to form ac(4)C34. The chain is tRNA(Met) cytidine acetate ligase from Streptococcus pneumoniae (strain ATCC 700669 / Spain 23F-1).